The chain runs to 514 residues: Cardiolipin synthase 2 (514 aa).

3 helical membrane passes run 7 to 27 (LIFF…FIDV), 41 to 61 (ILGI…CVIF), and 71 to 91 (LTWL…YLLF). PLD phosphodiesterase domains follow at residues 249–276 (INYR…GDEY) and 427–454 (EKGF…DMRS). Catalysis depends on residues His254, Lys256, Asp261, His432, Lys434, and Asp439.

The protein belongs to the phospholipase D family. Cardiolipin synthase subfamily.

It localises to the cell membrane. It carries out the reaction 2 a 1,2-diacyl-sn-glycero-3-phospho-(1'-sn-glycerol) = a cardiolipin + glycerol. In terms of biological role, catalyzes the reversible phosphatidyl group transfer from one phosphatidylglycerol molecule to another to form cardiolipin (CL) (diphosphatidylglycerol) and glycerol. The polypeptide is Cardiolipin synthase 2 (cls2) (Bacillus anthracis).